The primary structure comprises 69 residues: DNA-directed RNA polymerase subunit omega (69 aa).

Belongs to the RNA polymerase subunit omega family. As to quaternary structure, the RNAP catalytic core consists of 2 alpha, 1 beta, 1 beta' and 1 omega subunit. When a sigma factor is associated with the core the holoenzyme is formed, which can initiate transcription.

It catalyses the reaction RNA(n) + a ribonucleoside 5'-triphosphate = RNA(n+1) + diphosphate. Promotes RNA polymerase assembly. Latches the N- and C-terminal regions of the beta' subunit thereby facilitating its interaction with the beta and alpha subunits. The protein is DNA-directed RNA polymerase subunit omega of Pediococcus pentosaceus (strain ATCC 25745 / CCUG 21536 / LMG 10740 / 183-1w).